The chain runs to 138 residues: Basic phospholipase A2 homolog G6K49 (138 aa).

Positions 1–16 (MRTLWIMAVLLLGVEG) are cleaved as a signal peptide. Cystine bridges form between cysteine 42–cysteine 132, cysteine 44–cysteine 60, cysteine 59–cysteine 112, cysteine 65–cysteine 138, cysteine 66–cysteine 105, cysteine 73–cysteine 98, and cysteine 91–cysteine 103. The tract at residues 122-133 (KKHRVTVKFLCK) is important for membrane-damaging activities in eukaryotes and bacteria; heparin-binding.

The protein belongs to the phospholipase A2 family. Group II subfamily. K49 sub-subfamily. Homodimer; non-covalently linked. As to expression, expressed by the venom gland.

Its subcellular location is the secreted. In terms of biological role, snake venom phospholipase A2 (PLA2) that lacks enzymatic activity. Displays myotoxic activities. A model of myotoxic mechanism has been proposed: an apo Lys49-PLA2 is activated by the entrance of a hydrophobic molecule (e.g. fatty acid) at the hydrophobic channel of the protein leading to a reorientation of a monomer. This reorientation causes a transition between 'inactive' to 'active' states, causing alignment of C-terminal and membrane-docking sites (MDoS) side-by-side and putting the membrane-disruption sites (MDiS) in the same plane, exposed to solvent and in a symmetric position for both monomers. The MDoS region stabilizes the toxin on membrane by the interaction of charged residues with phospholipid head groups. Subsequently, the MDiS region destabilizes the membrane with penetration of hydrophobic residues. This insertion causes a disorganization of the membrane, allowing an uncontrolled influx of ions (i.e. calcium and sodium), and eventually triggering irreversible intracellular alterations and cell death. This is Basic phospholipase A2 homolog G6K49 from Calloselasma rhodostoma (Malayan pit viper).